We begin with the raw amino-acid sequence, 254 residues long: GPI alpha-1,4-mannosyltransferase I, stabilizing subunit (254 aa).

Positions 1 to 22 (MAAGAVAWLLLWAAWLVGRLAA) are cleaved as a signal peptide. The Lumenal portion of the chain corresponds to 23-226 (DFSDAPFSAG…PVGLTIHTSL (204 aa)). A glycan (N-linked (GlcNAc...) asparagine) is linked at Asn-211. The helical transmembrane segment at 227 to 247 (VCSVTLLITILCSTLILLAVF) threads the bilayer. Residues 248–254 (KYGHFSL) are Cytoplasmic-facing.

Belongs to the PIGX family. As to quaternary structure, part of the glycosylphosphatidylinositol-mannosyltransferase I complex that is composed of PIGM and PIGX. Interacts with PIGM; PIGX stabilizes PIGM.

It localises to the endoplasmic reticulum membrane. It functions in the pathway glycolipid biosynthesis; glycosylphosphatidylinositol-anchor biosynthesis. Stabilizing subunit of the glycosylphosphatidylinositol-mannosyltransferase I complex which catalyzes the transfer of the first mannose, via an alpha-1,4 bond from a dolichol-phosphate-mannose (Dol-P-Man) to the glucosaminyl acyl phosphatidylinositol (GlcN-(acyl)PI) intermediate to generate alpha-D-Man-(1-&gt;4)-alpha-D-GlcN-(1-&gt;6)-(1-radyl,2-acyl-sn-glycero-3-phospho)-2-acyl-inositol and participates in the sixth step of the glycosylphosphatidylinositol-anchor biosynthesis. Probably acts by stabilizing the mannosyltransferase PIGM. This Mus musculus (Mouse) protein is GPI alpha-1,4-mannosyltransferase I, stabilizing subunit.